A 190-amino-acid polypeptide reads, in one-letter code: Adenine phosphoribosyltransferase (190 aa).

Belongs to the purine/pyrimidine phosphoribosyltransferase family. Homodimer.

The protein localises to the cytoplasm. It carries out the reaction AMP + diphosphate = 5-phospho-alpha-D-ribose 1-diphosphate + adenine. The protein operates within purine metabolism; AMP biosynthesis via salvage pathway; AMP from adenine: step 1/1. In terms of biological role, catalyzes a salvage reaction resulting in the formation of AMP, that is energically less costly than de novo synthesis. The sequence is that of Adenine phosphoribosyltransferase from Treponema pallidum (strain Nichols).